Here is a 69-residue protein sequence, read N- to C-terminus: Conopeptide Y-Pl1 (69 aa).

Positions 1–20 (MSKLGVVLFVFLLLLPLAAP) are cleaved as a signal peptide. A propeptide spanning residues 21–69 (QPVGDQPADQPADRNAEARARFLHPFQYYTLYRYLTRFLHRYPIYYIRY) is cleaved from the precursor.

This sequence belongs to the conotoxin M superfamily. Conopeptide Y family. Expressed by the venom duct.

It localises to the secreted. Functionally, tyrosine-rich conopeptide that targets several channels/receptors that are expressed in Xenopus oocytes. These targets are the voltage-gated potassium channels Kv1.6/KCNA6 (IC(50) is 170 nM) and Kv1.2/KCNA2 (IC(50) is 2.0 uM), Nav1.2/SCN2A (30% of inhibition), and N-methyl-D-aspartate (NMDA) receptor (GRIN1/GRIN2A/GRIN3B and GRIN1/GRIN2B/GRIN3B) (15% of inhibition). In vivo, causes the marine worm N.virens to move very slowly in contrast to control worms, and causes seizures (at 5 nmol) and death (20 nmol) to mice when intracranially injected. The sequence is that of Conopeptide Y-Pl1 from Conus planorbis (Planorbis cone).